Reading from the N-terminus, the 509-residue chain is Anaerobic nitric oxide reductase transcription regulator NorR (509 aa).

Asp-56 carries the post-translational modification 4-aspartylphosphate. The Sigma-54 factor interaction domain maps to 186–415; the sequence is MIGRSPAMDR…LEHAIHRAAV (230 aa). ATP-binding positions include 214-221 and 277-286; these read GETGVGKE and ADKGTLFLDE. The H-T-H motif DNA-binding region spans 484 to 503; the sequence is WAATARALEMDGGNLHRLAR.

The protein operates within nitrogen metabolism; nitric oxide reduction. Functionally, required for the expression of anaerobic nitric oxide (NO) reductase, acts as a transcriptional activator for at least the norVW operon. Activation also requires sigma-54. The chain is Anaerobic nitric oxide reductase transcription regulator NorR from Aeromonas salmonicida (strain A449).